Consider the following 86-residue polypeptide: Weak neurotoxin 10 (86 aa).

Residues 1–21 (MKTLLLTLVVVTIVCLDLGYT) form the signal peptide. Disulfide bonds link C24–C45, C27–C32, C38–C63, C67–C78, and C79–C84.

It belongs to the three-finger toxin family. Ancestral subfamily. Orphan group II sub-subfamily. In terms of tissue distribution, expressed by the venom gland.

It localises to the secreted. Its function is as follows. Binds with low affinity to muscular (alpha-1-beta-1-delta-epsilon/CHRNA1-CHRNB1-CHRND-CHRNE) and very low affinity to neuronal (alpha-7/CHRNA7) nicotinic acetylcholine receptor (nAChR). In Naja sputatrix (Malayan spitting cobra), this protein is Weak neurotoxin 10 (WNTX10).